Consider the following 121-residue polypeptide: MDNKCTFSRKEDGVCEYKKNEVRTSQSEVPKTSIKKSDNGEKDEKEEKELNLENIIKKASANPQQRKNQKKYHRASSDCDSSDDEKDEPYYHGSKASTTLTREQALKLSLRKKIDERKLNK.

Residues 20–98 are disordered; it reads NEVRTSQSEV…PYYHGSKAST (79 aa). Over residues 35 to 51 the composition is skewed to basic and acidic residues; sequence KKSDNGEKDEKEEKELN.

This is an uncharacterized protein from Invertebrate iridescent virus 6 (IIV-6).